Here is a 192-residue protein sequence, read N- to C-terminus: uncharacterized protein (192 aa).

A Nudix hydrolase domain is found at 29 to 160 (HRQAAVLIPI…PLDIYRRGDS (132 aa)). A Nudix box motif is present at residues 67–89 (GAVDDTDTSVIAAALREAEEEVA). Mg(2+) is bound by residues E83 and E87.

Belongs to the Nudix hydrolase family. PCD1 subfamily. Mn(2+) serves as cofactor. The cofactor is Mg(2+).

In terms of biological role, probably mediates the hydrolysis of some nucleoside diphosphate derivatives. This is an uncharacterized protein from Escherichia fergusonii (strain ATCC 35469 / DSM 13698 / CCUG 18766 / IAM 14443 / JCM 21226 / LMG 7866 / NBRC 102419 / NCTC 12128 / CDC 0568-73).